The following is a 210-amino-acid chain: Thymidylate kinase (210 aa).

10–17 is a binding site for ATP; that stretch reads GPDGAGKT.

The protein belongs to the thymidylate kinase family.

It catalyses the reaction dTMP + ATP = dTDP + ADP. Functionally, phosphorylation of dTMP to form dTDP in both de novo and salvage pathways of dTTP synthesis. This Geobacillus sp. (strain WCH70) protein is Thymidylate kinase.